The chain runs to 679 residues: Penicillin-binding protein 1A (679 aa).

A compositionally biased stretch (basic residues) spans 1 to 14 (MTERKREHKDRKQN). A disordered region spans residues 1 to 20 (MTERKREHKDRKQNKNSPKN). The Cytoplasmic segment spans residues 1 to 30 (MTERKREHKDRKQNKNSPKNQSKVTKFLKW). A helical; Signal-anchor for type II membrane protein membrane pass occupies residues 31–51 (FFIGILLLGITAVTVVGIYVL). At 52 to 679 (SIIRSSPELD…QYKEVDNLVE (628 aa)) the chain is on the extracellular side. The interval 72–244 (SILYDDQGNF…PTSYDGLSEA (173 aa)) is transglycosylase. The Proton donor; for transglycosylase activity role is filled by Glu-111. The segment at 378–663 (ASATIIDYKT…TSPIFGKIMG (286 aa)) is transpeptidase. The Acyl-ester intermediate; for transpeptidase activity role is filled by Ser-417.

It in the N-terminal section; belongs to the glycosyltransferase 51 family. The protein in the C-terminal section; belongs to the transpeptidase family.

Its subcellular location is the cell membrane. It catalyses the reaction [GlcNAc-(1-&gt;4)-Mur2Ac(oyl-L-Ala-gamma-D-Glu-L-Lys-D-Ala-D-Ala)](n)-di-trans,octa-cis-undecaprenyl diphosphate + beta-D-GlcNAc-(1-&gt;4)-Mur2Ac(oyl-L-Ala-gamma-D-Glu-L-Lys-D-Ala-D-Ala)-di-trans,octa-cis-undecaprenyl diphosphate = [GlcNAc-(1-&gt;4)-Mur2Ac(oyl-L-Ala-gamma-D-Glu-L-Lys-D-Ala-D-Ala)](n+1)-di-trans,octa-cis-undecaprenyl diphosphate + di-trans,octa-cis-undecaprenyl diphosphate + H(+). The catalysed reaction is Preferential cleavage: (Ac)2-L-Lys-D-Ala-|-D-Ala. Also transpeptidation of peptidyl-alanyl moieties that are N-acyl substituents of D-alanine.. The protein operates within cell wall biogenesis; peptidoglycan biosynthesis. Cell wall formation. Synthesis of cross-linked peptidoglycan from the lipid intermediates. The enzyme has a penicillin-insensitive transglycosylase N-terminal domain (formation of linear glycan strands) and a penicillin-sensitive transpeptidase C-terminal domain (cross-linking of the peptide subunits). In Clostridium perfringens (strain 13 / Type A), this protein is Penicillin-binding protein 1A (pbpA).